A 324-amino-acid polypeptide reads, in one-letter code: ATP-dependent 6-phosphofructokinase (324 aa).

ATP is bound at residue Gly-11. 21–25 (RAVVR) is an ADP binding site. ATP-binding positions include 72–73 (RE) and 102–105 (GNGS). Asn-103 contributes to the Mg(2+) binding site. 126–128 (TID) is a substrate binding site. Asp-128 serves as the catalytic Proton acceptor. Arg-155 lines the ADP pocket. Substrate contacts are provided by residues Arg-163 and 170-172 (MGR). Residues 186-188 (GAD), Arg-212, and 214-216 (KKF) contribute to the ADP site. Substrate contacts are provided by residues Glu-223, Arg-248, and 254-257 (YIQR).

This sequence belongs to the phosphofructokinase type A (PFKA) family. ATP-dependent PFK group I subfamily. Prokaryotic clade 'B1' sub-subfamily. As to quaternary structure, homotetramer. It depends on Mg(2+) as a cofactor.

The protein localises to the cytoplasm. It catalyses the reaction beta-D-fructose 6-phosphate + ATP = beta-D-fructose 1,6-bisphosphate + ADP + H(+). It participates in carbohydrate degradation; glycolysis; D-glyceraldehyde 3-phosphate and glycerone phosphate from D-glucose: step 3/4. Allosterically activated by ADP and other diphosphonucleosides, and allosterically inhibited by phosphoenolpyruvate. Its function is as follows. Catalyzes the phosphorylation of D-fructose 6-phosphate to fructose 1,6-bisphosphate by ATP, the first committing step of glycolysis. The polypeptide is ATP-dependent 6-phosphofructokinase (Persephonella marina (strain DSM 14350 / EX-H1)).